Consider the following 31-residue polypeptide: LysM-domain containing protein (31 aa).

The LysM 1 repeat unit spans residues 1-28; that stretch reads YSPSLTDLQSYNAMNGPALKAGDILAVP.

The chain is LysM-domain containing protein from Jatropha curcas (Barbados nut).